The primary structure comprises 114 residues: Cholecystokinin (114 aa).

A signal peptide spans 1–20 (MNGGLCLCVLMAVLAAGTLA). A Sulfotyrosine modification is found at tyrosine 96. Residue phenylalanine 102 is modified to Phenylalanine amide. Positions 106 to 114 (SAEEYEYTS) are excised as a propeptide. A sulfotyrosine mark is found at tyrosine 110 and tyrosine 112.

The protein belongs to the gastrin/cholecystokinin family. Binds to CCK-A receptors in the pancreas and CCK-B receptors in the brain. In terms of processing, the precursor is cleaved by proteases to produce a number of active cholecystokinins. Brain contains CCK-octapeptide (CCK8) and several CCK-desoctapeptides; whereas pig gut contains intact CCK33, CCK39, and CCK58 as well as CCK-octapeptide and the CCK-desoctapeptides. Distribution differences are due to tissue-specific post-translational processing events. The precursor is cleaved by ACE, which removes the Gly-Arg-Arg peptide at the C-terminus, leading to mature hormone. As to expression, synthesized in both cerebral cortex and duodenal mucosa.

The protein resides in the secreted. Functionally, this peptide hormone induces gall bladder contraction and the release of pancreatic enzymes in the gut. Its function in the brain is not clear. Binding to CCK-A receptors stimulates amylase release from the pancreas, binding to CCK-B receptors stimulates gastric acid secretion. This chain is Cholecystokinin (CCK), found in Sus scrofa (Pig).